Here is a 208-residue protein sequence, read N- to C-terminus: Protein-L-isoaspartate O-methyltransferase (208 aa).

Ser59 is an active-site residue.

This sequence belongs to the methyltransferase superfamily. L-isoaspartyl/D-aspartyl protein methyltransferase family. As to quaternary structure, monomer.

Its subcellular location is the cytoplasm. It carries out the reaction [protein]-L-isoaspartate + S-adenosyl-L-methionine = [protein]-L-isoaspartate alpha-methyl ester + S-adenosyl-L-homocysteine. Catalyzes the methyl esterification of L-isoaspartyl residues in peptides and proteins that result from spontaneous decomposition of normal L-aspartyl and L-asparaginyl residues. It plays a role in the repair and/or degradation of damaged proteins. In Shigella flexneri, this protein is Protein-L-isoaspartate O-methyltransferase (pcm).